The primary structure comprises 233 residues: Leucyl/phenylalanyl-tRNA--protein transferase (233 aa).

The protein belongs to the L/F-transferase family.

It localises to the cytoplasm. It catalyses the reaction N-terminal L-lysyl-[protein] + L-leucyl-tRNA(Leu) = N-terminal L-leucyl-L-lysyl-[protein] + tRNA(Leu) + H(+). The enzyme catalyses N-terminal L-arginyl-[protein] + L-leucyl-tRNA(Leu) = N-terminal L-leucyl-L-arginyl-[protein] + tRNA(Leu) + H(+). It carries out the reaction L-phenylalanyl-tRNA(Phe) + an N-terminal L-alpha-aminoacyl-[protein] = an N-terminal L-phenylalanyl-L-alpha-aminoacyl-[protein] + tRNA(Phe). Functionally, functions in the N-end rule pathway of protein degradation where it conjugates Leu, Phe and, less efficiently, Met from aminoacyl-tRNAs to the N-termini of proteins containing an N-terminal arginine or lysine. The chain is Leucyl/phenylalanyl-tRNA--protein transferase from Chromobacterium violaceum (strain ATCC 12472 / DSM 30191 / JCM 1249 / CCUG 213 / NBRC 12614 / NCIMB 9131 / NCTC 9757 / MK).